Here is a 201-residue protein sequence, read N- to C-terminus: 3-isopropylmalate dehydratase small subunit (201 aa).

It belongs to the LeuD family. LeuD type 1 subfamily. As to quaternary structure, heterodimer of LeuC and LeuD.

It carries out the reaction (2R,3S)-3-isopropylmalate = (2S)-2-isopropylmalate. Its pathway is amino-acid biosynthesis; L-leucine biosynthesis; L-leucine from 3-methyl-2-oxobutanoate: step 2/4. Catalyzes the isomerization between 2-isopropylmalate and 3-isopropylmalate, via the formation of 2-isopropylmaleate. This Micrococcus luteus (strain ATCC 4698 / DSM 20030 / JCM 1464 / CCM 169 / CCUG 5858 / IAM 1056 / NBRC 3333 / NCIMB 9278 / NCTC 2665 / VKM Ac-2230) (Micrococcus lysodeikticus) protein is 3-isopropylmalate dehydratase small subunit.